Reading from the N-terminus, the 786-residue chain is Progesterone receptor (786 aa).

Residues 1–10 (MTEVKSKETR) are compositionally biased toward basic and acidic residues. 3 disordered regions span residues 1-95 (MTEV…SKDC), 110-212 (AAPW…ASPA), and 252-279 (SAFGPRSSPSVPAADLAEYGYPPPDGKE). The tract at residues 1 to 420 (MTEVKSKETR…YSFESLPQKI (420 aa)) is modulating, Pro-Rich. A Glycyl lysine isopeptide (Lys-Gly) (interchain with G-Cter in SUMO) cross-link involves residue Lys-7. A compositionally biased stretch (acidic residues) spans 48–79 (DEEEEEEENEEEEEEEEPQQREEEEEEEEEDR). Residues 143–154 (APGPSQPRPGAP) show a composition bias toward pro residues. A compositionally biased stretch (basic and acidic residues) spans 186–197 (AEERGFPERDAG). The segment covering 203-212 (LAPAAAASPA) has biased composition (low complexity). A phosphoserine mark is found at Ser-210 and Ser-259. Lys-294 participates in a covalent cross-link: Glycyl lysine isopeptide (Lys-Gly) (interchain with G-Cter in SUMO); alternate. A Glycyl lysine isopeptide (Lys-Gly) (interchain with G-Cter in ubiquitin); alternate cross-link involves residue Lys-294. A Glycyl lysine isopeptide (Lys-Gly) (interchain with G-Cter in SUMO) cross-link involves residue Lys-385. 2 consecutive NR C4-type zinc fingers follow at residues 421-441 (CLICGDEASGCHYGVLTCGSC) and 457-481 (CAGRNDCIVDKIRRKNCPACRLRKC). Positions 421-486 (CLICGDEASG…RLRKCCQAGM (66 aa)) form a DNA-binding region, nuclear receptor. Ser-529 carries the phosphoserine modification. Residues 532–766 (QEIPFVPPMI…EFPEMMSEVI (235 aa)) enclose the NR LBD domain.

The protein belongs to the nuclear hormone receptor family. NR3 subfamily. Post-translationally, phosphorylation of Ser-529 is sharply increased upon progesterone treatment, whereas phosphorylation of Ser-210 and Ser-259 is modestly induced by progesterone. Ubiquitinated. Ubiquitination is increased by progesterone and represses sumoylation at the same site. In terms of processing, sumoylation is hormone-dependent and represses transcriptional activity. Sumoylation on all three sites is enhanced by PIAS3. Desumoylated by SENP1. Sumoylation on Lys-385, the main site of sumoylation, is repressed by ubiquitination on the same site. In terms of tissue distribution, oviduct and bursa of Fabricius.

The protein resides in the nucleus. The protein localises to the cytoplasm. Its function is as follows. The steroid hormones and their receptors are involved in the regulation of eukaryotic gene expression and affect cellular proliferation and differentiation in target tissues. This is Progesterone receptor (PGR) from Gallus gallus (Chicken).